A 576-amino-acid chain; its full sequence is Urease subunit alpha (576 aa).

Residues 132-576 (GGVDTHIHFI…LPMAQRYFLF (445 aa)) enclose the Urease domain. 3 residues coordinate Ni(2+): His137, His139, and Lys220. Lys220 carries the post-translational modification N6-carboxylysine. His222 provides a ligand contact to substrate. Ni(2+) is bound by residues His249 and His275. His323 serves as the catalytic Proton donor. Asp363 is a Ni(2+) binding site.

Belongs to the metallo-dependent hydrolases superfamily. Urease alpha subunit family. As to quaternary structure, heterotrimer of UreA (gamma), UreB (beta) and UreC (alpha) subunits. Three heterotrimers associate to form the active enzyme. Ni cation serves as cofactor. In terms of processing, carboxylation allows a single lysine to coordinate two nickel ions.

Its subcellular location is the cytoplasm. The enzyme catalyses urea + 2 H2O + H(+) = hydrogencarbonate + 2 NH4(+). Its pathway is nitrogen metabolism; urea degradation; CO(2) and NH(3) from urea (urease route): step 1/1. The sequence is that of Urease subunit alpha from Arthrobacter sp. (strain FB24).